The sequence spans 250 residues: Kallikrein-9 (250 aa).

The signal sequence occupies residues Met1 to Gly15. The region spanning Ala23–Glu249 is the Peptidase S1 domain. Intrachain disulfides connect Cys29/Cys164, Cys48/Cys64, Cys136/Cys238, Cys143/Cys210, Cys175/Cys189, and Cys200/Cys225. Active-site charge relay system residues include His63 and Asp111. Residues Asn131 and Asn166 are each glycosylated (N-linked (GlcNAc...) asparagine). Ser204 serves as the catalytic Charge relay system. Asn211 carries N-linked (GlcNAc...) asparagine glycosylation.

Belongs to the peptidase S1 family. Kallikrein subfamily. As to expression, skin, thymus, trachea, cerebellum and spinal cord.

The protein localises to the secreted. The polypeptide is Kallikrein-9 (KLK9) (Homo sapiens (Human)).